A 208-amino-acid chain; its full sequence is MEPVKMTNSSDDFTQSAEPFKLFAEWLADAAKSEPNDPNAVALATVDPDGLPNVRMVLLKDFDETGFVFYTNYESKKGQEILSAEKAAMCFHWKSLRRQVRVRGPVEKVSDAEADAYYASRPRGSRIGAWASKQSRPLESRFALEKAVAEYTAKYAIGDIPRPPYWSGFRIRPVSIEFWHDRPFRLHDRVLFTRPTPEGDWNKDRLYP.

Residues Arg-55–Lys-60, Tyr-70–Thr-71, Lys-76, Lys-77, and Gln-99 each bind FMN. Lys-60 contacts substrate. Substrate contacts are provided by Tyr-117, Arg-121, and Ser-125. FMN-binding positions include Gln-134–Ser-135 and Trp-179. Arg-185–His-187 is a substrate binding site. Residue Arg-189 coordinates FMN.

It belongs to the pyridoxamine 5'-phosphate oxidase family. In terms of assembly, homodimer. The cofactor is FMN.

It catalyses the reaction pyridoxamine 5'-phosphate + O2 + H2O = pyridoxal 5'-phosphate + H2O2 + NH4(+). The enzyme catalyses pyridoxine 5'-phosphate + O2 = pyridoxal 5'-phosphate + H2O2. Its pathway is cofactor metabolism; pyridoxal 5'-phosphate salvage; pyridoxal 5'-phosphate from pyridoxamine 5'-phosphate: step 1/1. It participates in cofactor metabolism; pyridoxal 5'-phosphate salvage; pyridoxal 5'-phosphate from pyridoxine 5'-phosphate: step 1/1. Catalyzes the oxidation of either pyridoxine 5'-phosphate (PNP) or pyridoxamine 5'-phosphate (PMP) into pyridoxal 5'-phosphate (PLP). This is Pyridoxine/pyridoxamine 5'-phosphate oxidase from Brucella abortus biovar 1 (strain 9-941).